A 238-amino-acid chain; its full sequence is Purine nucleoside phosphorylase DeoD-type (238 aa).

H4 lines the a purine D-ribonucleoside pocket. Residues G20, R24, R43, and 87–90 (RVGS) each bind phosphate. A purine D-ribonucleoside is bound by residues 179–181 (EME) and 203–204 (SD). D204 (proton donor) is an active-site residue.

It belongs to the PNP/UDP phosphorylase family. As to quaternary structure, homohexamer; trimer of homodimers.

The enzyme catalyses a purine D-ribonucleoside + phosphate = a purine nucleobase + alpha-D-ribose 1-phosphate. It carries out the reaction a purine 2'-deoxy-D-ribonucleoside + phosphate = a purine nucleobase + 2-deoxy-alpha-D-ribose 1-phosphate. Functionally, catalyzes the reversible phosphorolytic breakdown of the N-glycosidic bond in the beta-(deoxy)ribonucleoside molecules, with the formation of the corresponding free purine bases and pentose-1-phosphate. This chain is Purine nucleoside phosphorylase DeoD-type, found in Histophilus somni (strain 2336) (Haemophilus somnus).